The primary structure comprises 507 residues: Anthranilate synthase component 1 (507 aa).

Ser-65 serves as a coordination point for L-tryptophan. Phosphoserine is present on Ser-81. At Thr-223 the chain carries Phosphothreonine. 280-282 serves as a coordination point for L-tryptophan; that stretch reads PYL. Residue 316 to 317 coordinates chorismate; it reads GT. Glu-343 lines the Mg(2+) pocket. Chorismate is bound by residues Tyr-431, Arg-452, 466–468, and Gly-468; that span reads GGG. Glu-481 is a Mg(2+) binding site.

The protein belongs to the anthranilate synthase component I family. In terms of assembly, tetramer of two components I and two components II. Mg(2+) is required as a cofactor.

It carries out the reaction chorismate + L-glutamine = anthranilate + pyruvate + L-glutamate + H(+). It functions in the pathway amino-acid biosynthesis; L-tryptophan biosynthesis; L-tryptophan from chorismate: step 1/5. The sequence is that of Anthranilate synthase component 1 (TRP2) from Saccharomyces cerevisiae (strain ATCC 204508 / S288c) (Baker's yeast).